Here is an 803-residue protein sequence, read N- to C-terminus: Translation initiation factor IF-2 (803 aa).

Disordered stretches follow at residues 95–125 and 138–178; these read PVVE…EKAE and EVKE…EREE. Over residues 111-121 the composition is skewed to polar residues; that stretch reads VPLTSDTTNLN. Over residues 138–155 the composition is skewed to basic and acidic residues; sequence EVKEEAKKTPSEKKETPK. Over residues 156–167 the composition is skewed to basic residues; that stretch reads KGPRKETRRSRK. Basic and acidic residues predominate over residues 168–178; sequence PDKEDKWEREE. Residues 302–471 enclose the tr-type G domain; the sequence is PRAPVVTIMG…LLQAEVLELK (170 aa). The interval 311-318 is G1; sequence GHVDHGKT. GTP is bound at residue 311–318; it reads GHVDHGKT. A G2 region spans residues 336–340; the sequence is GITQH. A G3 region spans residues 357-360; it reads DTPG. Residues 357-361 and 411-414 contribute to the GTP site; these read DTPGH and NKID. The segment at 411–414 is G4; sequence NKID. The segment at 447-449 is G5; it reads SAK.

It belongs to the TRAFAC class translation factor GTPase superfamily. Classic translation factor GTPase family. IF-2 subfamily.

It is found in the cytoplasm. Functionally, one of the essential components for the initiation of protein synthesis. Protects formylmethionyl-tRNA from spontaneous hydrolysis and promotes its binding to the 30S ribosomal subunits. Also involved in the hydrolysis of GTP during the formation of the 70S ribosomal complex. This chain is Translation initiation factor IF-2, found in Coxiella burnetii (strain Dugway 5J108-111).